A 309-amino-acid polypeptide reads, in one-letter code: MEQDNTTLLTEFVLTGLTYQPEWKMPLFLVFLVIYLITIVWNLGLIALIWNDPQLHIPMYFFLGSLAFVDAWISSTVTPKMLVNFLAKNRMISLSECMIQFFSFAFGGTTECFLLATMAYDRYVAICKPLLYPVIMNNSLCIRLLAFSFLGGFLHALIHEVLIFRLTFCNSNIIHHFYCDIIPLFMISCTDPSINFLMVFILSGSIQVFTIVTVLNSYTFALFTILKKKSVRGVRKAFSTCGAHLLSVSLYYGPLIFMYLRPASPQADDQDMIDSVFYTIIIPLLNPIIYSLRNKQVIDSFTKMVKRNV.

The Extracellular portion of the chain corresponds to 1-28 (MEQDNTTLLTEFVLTGLTYQPEWKMPLF). Residue Asn5 is glycosylated (N-linked (GlcNAc...) asparagine). Residues 29–49 (LVFLVIYLITIVWNLGLIALI) form a helical membrane-spanning segment. Topologically, residues 50–56 (WNDPQLH) are cytoplasmic. Residues 57 to 77 (IPMYFFLGSLAFVDAWISSTV) form a helical membrane-spanning segment. At 78-97 (TPKMLVNFLAKNRMISLSEC) the chain is on the extracellular side. A disulfide bridge connects residues Cys97 and Cys179. Residues 98–118 (MIQFFSFAFGGTTECFLLATM) form a helical membrane-spanning segment. Topologically, residues 119 to 143 (AYDRYVAICKPLLYPVIMNNSLCIR) are cytoplasmic. The chain crosses the membrane as a helical span at residues 144–164 (LLAFSFLGGFLHALIHEVLIF). The Extracellular portion of the chain corresponds to 165–193 (RLTFCNSNIIHHFYCDIIPLFMISCTDPS). Residues 194–214 (INFLMVFILSGSIQVFTIVTV) traverse the membrane as a helical segment. The Cytoplasmic segment spans residues 215–239 (LNSYTFALFTILKKKSVRGVRKAFS). The helical transmembrane segment at 240-260 (TCGAHLLSVSLYYGPLIFMYL) threads the bilayer. The Extracellular portion of the chain corresponds to 261–271 (RPASPQADDQD). The chain crosses the membrane as a helical span at residues 272–292 (MIDSVFYTIIIPLLNPIIYSL). Topologically, residues 293–309 (RNKQVIDSFTKMVKRNV) are cytoplasmic.

Belongs to the G-protein coupled receptor 1 family.

The protein resides in the cell membrane. In terms of biological role, odorant receptor. The sequence is that of Olfactory receptor 5H2 (OR5H2) from Homo sapiens (Human).